The following is a 361-amino-acid chain: 3-dehydroquinate synthase (361 aa).

NAD(+) contacts are provided by residues 60-65, 94-98, 118-119, K131, and K140; these read DAEAAK, GATTD, and TT. Residues E173, H242, and H258 each coordinate Zn(2+).

This sequence belongs to the sugar phosphate cyclases superfamily. Dehydroquinate synthase family. The cofactor is Co(2+). Zn(2+) is required as a cofactor. Requires NAD(+) as cofactor.

The protein localises to the cytoplasm. It carries out the reaction 7-phospho-2-dehydro-3-deoxy-D-arabino-heptonate = 3-dehydroquinate + phosphate. The protein operates within metabolic intermediate biosynthesis; chorismate biosynthesis; chorismate from D-erythrose 4-phosphate and phosphoenolpyruvate: step 2/7. Its function is as follows. Catalyzes the conversion of 3-deoxy-D-arabino-heptulosonate 7-phosphate (DAHP) to dehydroquinate (DHQ). The protein is 3-dehydroquinate synthase of Cutibacterium acnes (strain DSM 16379 / KPA171202) (Propionibacterium acnes).